A 608-amino-acid polypeptide reads, in one-letter code: Serine/threonine-protein kinase SSN3 (608 aa).

The tract at residues 1–72 (MSYSSASFRK…PGTVGTRTSI (72 aa)) is disordered. Low complexity predominate over residues 17–47 (SQPSQTTTTTTSANQPQSQSQQQPLQQSQQQ). A compositionally biased stretch (basic residues) spans 49 to 59 (LHMKPNPHIPH). The Protein kinase domain occupies 104-492 (YQIMGYIAAG…ADQALLHPYF (389 aa)). Residues 110–118 (IAAGTYGKV) and Lys-182 each bind ATP. The active-site Proton acceptor is Asp-307. Residues 523–608 (MTTAANNNNN…LPGGIRKKRG (86 aa)) are disordered. Positions 528–583 (NNNNNNNNNNNNNNNNNNNNNNNNNNNSGHQLSQQQNVQIQQVHQMQQQIHSQQLQ) are enriched in low complexity.

Belongs to the protein kinase superfamily. CMGC Ser/Thr protein kinase family. CDC2/CDKX subfamily. In terms of assembly, component of the SRB8-11 complex, a regulatory module of the Mediator complex. Mg(2+) is required as a cofactor.

The protein resides in the nucleus. It carries out the reaction L-seryl-[protein] + ATP = O-phospho-L-seryl-[protein] + ADP + H(+). It catalyses the reaction L-threonyl-[protein] + ATP = O-phospho-L-threonyl-[protein] + ADP + H(+). The catalysed reaction is [DNA-directed RNA polymerase] + ATP = phospho-[DNA-directed RNA polymerase] + ADP + H(+). Component of the SRB8-11 complex. The SRB8-11 complex is a regulatory module of the Mediator complex which is itself involved in regulation of basal and activated RNA polymerase II-dependent transcription. The SRB8-11 complex may be involved in the transcriptional repression of a subset of genes regulated by Mediator. It may inhibit the association of the Mediator complex with RNA polymerase II to form the holoenzyme complex. The SRB8-11 complex phosphorylates the C-terminal domain (CTD) of the largest subunit of RNA polymerase II. This is Serine/threonine-protein kinase SSN3 (SSN3) from Candida albicans (strain SC5314 / ATCC MYA-2876) (Yeast).